The following is a 50-amino-acid chain: Small ribosomal subunit protein eS31 (50 aa).

Cys-22, Cys-25, Cys-40, and Cys-43 together coordinate Zn(2+). The segment at 22–43 (CPRCGPGVFMADHGDRWACGKC) adopts a C4-type zinc-finger fold.

This sequence belongs to the eukaryotic ribosomal protein eS31 family. In terms of assembly, part of the 30S ribosomal subunit. It depends on Zn(2+) as a cofactor.

This chain is Small ribosomal subunit protein eS31, found in Pyrococcus horikoshii (strain ATCC 700860 / DSM 12428 / JCM 9974 / NBRC 100139 / OT-3).